The sequence spans 117 residues: Large ribosomal subunit protein bL19 (117 aa).

It belongs to the bacterial ribosomal protein bL19 family.

Its function is as follows. This protein is located at the 30S-50S ribosomal subunit interface and may play a role in the structure and function of the aminoacyl-tRNA binding site. This chain is Large ribosomal subunit protein bL19, found in Aliivibrio salmonicida (strain LFI1238) (Vibrio salmonicida (strain LFI1238)).